An 843-amino-acid polypeptide reads, in one-letter code: Protein P (843 aa).

The tract at residues methionine 1 to glutamine 177 is terminal protein domain (TP). The segment at glutamate 178–leucine 346 is spacer. Positions histidine 248–serine 272 are disordered. The interval glutamate 347–glutamine 690 is polymerase/reverse transcriptase domain (RT). One can recognise a Reverse transcriptase domain in the interval glutamate 357 to isoleucine 600. Mg(2+)-binding residues include aspartate 429, aspartate 551, and aspartate 552.

It belongs to the hepadnaviridae P protein family.

It carries out the reaction DNA(n) + a 2'-deoxyribonucleoside 5'-triphosphate = DNA(n+1) + diphosphate. The catalysed reaction is Endonucleolytic cleavage to 5'-phosphomonoester.. Its activity is regulated as follows. Activated by host HSP70 and HSP40 in vitro to be able to bind the epsilon loop of the pgRNA. Because deletion of the RNase H region renders the protein partly chaperone-independent, the chaperones may be needed indirectly to relieve occlusion of the RNA-binding site by this domain. Inhibited by several reverse-transcriptase inhibitors: Lamivudine, Adefovir and Entecavir. Functionally, multifunctional enzyme that converts the viral RNA genome into dsDNA in viral cytoplasmic capsids. This enzyme displays a DNA polymerase activity that can copy either DNA or RNA templates, and a ribonuclease H (RNase H) activity that cleaves the RNA strand of RNA-DNA heteroduplexes in a partially processive 3'- to 5'-endonucleasic mode. Neo-synthesized pregenomic RNA (pgRNA) are encapsidated together with the P protein, and reverse-transcribed inside the nucleocapsid. Initiation of reverse-transcription occurs first by binding the epsilon loop on the pgRNA genome, and is initiated by protein priming, thereby the 5'-end of (-)DNA is covalently linked to P protein. Partial (+)DNA is synthesized from the (-)DNA template and generates the relaxed circular DNA (RC-DNA) genome. After budding and infection, the RC-DNA migrates in the nucleus, and is converted into a plasmid-like covalently closed circular DNA (cccDNA). The activity of P protein does not seem to be necessary for cccDNA generation, and is presumably released from (+)DNA by host nuclear DNA repair machinery. In Homo sapiens (Human), this protein is Protein P.